Here is a 286-residue protein sequence, read N- to C-terminus: Probable glucose uptake protein GlcU (286 aa).

Helical transmembrane passes span 4-22 (IFLA…LFNV), 27-49 (GPYS…VYIF), 53-72 (VLTP…WALG), 85-107 (VSRT…GVIV), 111-133 (WSTT…GVIL), 154-176 (IVIL…LFNV), 181-198 (ALLP…LLTF), 211-228 (IIPG…FISQ), 233-255 (VATS…ILIL), and 267-284 (IVVG…LGIA).

It belongs to the GRP transporter (TC 2.A.7.5) family.

Its subcellular location is the cell membrane. Its function is as follows. Involved in the uptake of glucose. This Bacillus cereus (strain ATCC 14579 / DSM 31 / CCUG 7414 / JCM 2152 / NBRC 15305 / NCIMB 9373 / NCTC 2599 / NRRL B-3711) protein is Probable glucose uptake protein GlcU (glcU).